The following is a 179-amino-acid chain: Large ribosomal subunit protein uL5c (179 aa).

It belongs to the universal ribosomal protein uL5 family. In terms of assembly, part of the 50S ribosomal subunit; contacts the 5S rRNA.

It localises to the plastid. It is found in the chloroplast. In terms of biological role, binds 5S rRNA, forms part of the central protuberance of the 50S subunit. This chain is Large ribosomal subunit protein uL5c (rpl5), found in Euglena gracilis.